We begin with the raw amino-acid sequence, 427 residues long: Adenylosuccinate synthetase (427 aa).

Residues glycine 12–lysine 18 and glycine 40–threonine 42 contribute to the GTP site. Aspartate 13 (proton acceptor) is an active-site residue. 2 residues coordinate Mg(2+): aspartate 13 and glycine 40. Residues aspartate 13–lysine 16, asparagine 38–histidine 41, threonine 126, arginine 140, glutamine 221, threonine 236, and arginine 299 each bind IMP. Histidine 41 acts as the Proton donor in catalysis. A substrate-binding site is contributed by serine 295–arginine 301. GTP-binding positions include arginine 301, lysine 327–aspartate 329, and serine 409–glycine 411.

This sequence belongs to the adenylosuccinate synthetase family. In terms of assembly, homodimer. Requires Mg(2+) as cofactor.

It localises to the cytoplasm. It catalyses the reaction IMP + L-aspartate + GTP = N(6)-(1,2-dicarboxyethyl)-AMP + GDP + phosphate + 2 H(+). It functions in the pathway purine metabolism; AMP biosynthesis via de novo pathway; AMP from IMP: step 1/2. In terms of biological role, plays an important role in the de novo pathway of purine nucleotide biosynthesis. Catalyzes the first committed step in the biosynthesis of AMP from IMP. This chain is Adenylosuccinate synthetase, found in Borrelia turicatae (strain 91E135).